The sequence spans 288 residues: Oxaloacetate decarboxylase (288 aa).

Ser-47 is a binding site for substrate. Asp-85 is a binding site for Mg(2+). Positions 156 and 232 each coordinate substrate.

Belongs to the isocitrate lyase/PEP mutase superfamily. Oxaloacetate decarboxylase family. In terms of assembly, homotetramer; dimer of dimers. The cofactor is Mg(2+).

The catalysed reaction is oxaloacetate + H(+) = pyruvate + CO2. Functionally, catalyzes the decarboxylation of oxaloacetate into pyruvate. Seems to play a role in maintaining cellular concentrations of bicarbonate and pyruvate. The protein is Oxaloacetate decarboxylase of Bradyrhizobium diazoefficiens (strain JCM 10833 / BCRC 13528 / IAM 13628 / NBRC 14792 / USDA 110).